The following is a 95-amino-acid chain: Mitochondrial import inner membrane translocase subunit TIM13 (95 aa).

Positions 47–67 (CFEKCLQSPYKDGNEGCVDQC) match the Twin CX3C motif motif. 2 cysteine pairs are disulfide-bonded: Cys47-Cys67 and Cys51-Cys63.

Belongs to the small Tim family. In terms of assembly, heterohexamer; composed of 3 copies of TIM8 and 3 copies of TIM13, named soluble 70 kDa complex. Associates with the TIM22 complex, whose core is composed of TIM22 and TIM54. Interacts with the transmembrane regions of multi-pass transmembrane proteins in transit.

It localises to the mitochondrion inner membrane. Its function is as follows. Mitochondrial intermembrane chaperone that participates in the import and insertion of some multi-pass transmembrane proteins into the mitochondrial inner membrane. Also required for the transfer of beta-barrel precursors from the TOM complex to the sorting and assembly machinery (SAM complex) of the outer membrane. Acts as a chaperone-like protein that protects the hydrophobic precursors from aggregation and guide them through the mitochondrial intermembrane space. The TIM8-TIM13 complex is non essential and only mediates the import of few proteins, while the predominant TIM9-TIM10 70 kDa complex is crucial and mediates the import of much more proteins. This Candida glabrata (strain ATCC 2001 / BCRC 20586 / JCM 3761 / NBRC 0622 / NRRL Y-65 / CBS 138) (Yeast) protein is Mitochondrial import inner membrane translocase subunit TIM13 (TIM13).